The following is a 189-amino-acid chain: UPF0312 protein VPA0850 (189 aa).

The first 22 residues, 1-22, serve as a signal peptide directing secretion; it reads MKKSLFATGLAIAMALPLGAQA.

The protein belongs to the UPF0312 family. Type 1 subfamily.

The protein resides in the periplasm. The chain is UPF0312 protein VPA0850 from Vibrio parahaemolyticus serotype O3:K6 (strain RIMD 2210633).